Consider the following 526-residue polypeptide: Cholesterol side-chain cleavage enzyme, mitochondrial (526 aa).

The transit peptide at 1–36 (MLAKGLSLRSVLVKGCQPFLSPTWQGPVLSTGKGAG) directs the protein to the mitochondrion. The span at 30–41 (STGKGAGTSTSS) shows a compositional bias: low complexity. The disordered stretch occupies residues 30 to 49 (STGKGAGTSTSSPRSFNEIP). Residue C458 participates in heme binding.

It belongs to the cytochrome P450 family. Interacts with FDX1/adrenodoxin. Heme is required as a cofactor.

It localises to the mitochondrion inner membrane. It catalyses the reaction 6 reduced [adrenodoxin] + cholesterol + 3 O2 + 6 H(+) = 4-methylpentanal + pregnenolone + 6 oxidized [adrenodoxin] + 4 H2O. It carries out the reaction 2 reduced [adrenodoxin] + cholesterol + O2 + 2 H(+) = (22R)-hydroxycholesterol + 2 oxidized [adrenodoxin] + H2O. The enzyme catalyses (22R)-hydroxycholesterol + 2 reduced [adrenodoxin] + O2 + 2 H(+) = (20R,22R)-20,22-dihydroxycholesterol + 2 oxidized [adrenodoxin] + H2O. The catalysed reaction is (20R,22R)-20,22-dihydroxycholesterol + 2 reduced [adrenodoxin] + O2 + 2 H(+) = 4-methylpentanal + pregnenolone + 2 oxidized [adrenodoxin] + 2 H2O. It functions in the pathway lipid metabolism; C21-steroid hormone metabolism. It participates in steroid metabolism; cholesterol metabolism. A cytochrome P450 monooxygenase that catalyzes the side-chain hydroxylation and cleavage of cholesterol to pregnenolone, the precursor of most steroid hormones. Catalyzes three sequential oxidation reactions of cholesterol, namely the hydroxylation at C22 followed with the hydroxylation at C20 to yield 20R,22R-hydroxycholesterol that is further cleaved between C20 and C22 to yield the C21-steroid pregnenolone and 4-methylpentanal. Mechanistically, uses molecular oxygen inserting one oxygen atom into a substrate and reducing the second into a water molecule. Two electrons are provided by NADPH via a two-protein mitochondrial transfer system comprising flavoprotein FDXR (adrenodoxin/ferredoxin reductase) and nonheme iron-sulfur protein FDX1 or FDX2 (adrenodoxin/ferredoxin). The chain is Cholesterol side-chain cleavage enzyme, mitochondrial from Mus musculus (Mouse).